The sequence spans 496 residues: Histidine--tRNA ligase (496 aa).

Belongs to the class-II aminoacyl-tRNA synthetase family. As to quaternary structure, homodimer.

It localises to the cytoplasm. The enzyme catalyses tRNA(His) + L-histidine + ATP = L-histidyl-tRNA(His) + AMP + diphosphate + H(+). The chain is Histidine--tRNA ligase from Bartonella bacilliformis (strain ATCC 35685 / KC583 / Herrer 020/F12,63).